A 378-amino-acid chain; its full sequence is Mannitol-1-phosphate 5-dehydrogenase (378 aa).

4 to 15 (SVHFGAGNIGRG) contributes to the NAD(+) binding site.

This sequence belongs to the mannitol dehydrogenase family.

It catalyses the reaction D-mannitol 1-phosphate + NAD(+) = beta-D-fructose 6-phosphate + NADH + H(+). This is Mannitol-1-phosphate 5-dehydrogenase from Streptococcus pneumoniae (strain 70585).